Here is a 1196-residue protein sequence, read N- to C-terminus: Beta/alpha-amylase (1196 aa).

Positions 1-35 (MTLYRSLWKKGCMLLLSLVLSLTAFIGSPSNTASA) are cleaved as a signal peptide. The beta-amylase stretch occupies residues 36–454 (AVADDFQASV…IISKAKPDNN (419 aa)). D76 is a substrate binding site. Ca(2+) contacts are provided by E83 and D87. Residues H116 and D124 each coordinate substrate. A disulfide bond links C118 and C126. E170 is a binding site for Ca(2+). The active-site Proton donor is E198. Substrate-binding residues include K314, H319, and T357. E394 (proton acceptor) is an active-site residue. Substrate is bound by residues 395–396 (NA) and R423. Repeats lie at residues 455-558 (GGTG…APAG) and 565-668 (GGTT…APSG). Over residues 544-553 (NSGNAGTITS) the composition is skewed to polar residues. The segment at 544–566 (NSGNAGTITSGAPAGANPGDGGG) is disordered. The segment at 669-1196 (SVLSVVTSTY…APKEVKVFTK (528 aa)) is alpha-amylase.

The protein in the N-terminal section; belongs to the glycosyl hydrolase 14 family. In the C-terminal section; belongs to the glycosyl hydrolase 13 family. The cofactor is Ca(2+).

The protein resides in the secreted. It catalyses the reaction Hydrolysis of (1-&gt;4)-alpha-D-glucosidic linkages in polysaccharides so as to remove successive maltose units from the non-reducing ends of the chains.. The catalysed reaction is Endohydrolysis of (1-&gt;4)-alpha-D-glucosidic linkages in polysaccharides containing three or more (1-&gt;4)-alpha-linked D-glucose units.. The precursor protein is proteolytically cleaved to produce multiform beta-amylases and a 48 kDa alpha-amylase after secretion. The polypeptide is Beta/alpha-amylase (Paenibacillus polymyxa (Bacillus polymyxa)).